We begin with the raw amino-acid sequence, 403 residues long: Ribosomal RNA large subunit methyltransferase I (403 aa).

Residues 9-88 (YPRLVLSKGR…ESIDIAFFTR (80 aa)) form the PUA domain.

The protein belongs to the methyltransferase superfamily. RlmI family.

The protein resides in the cytoplasm. It catalyses the reaction cytidine(1962) in 23S rRNA + S-adenosyl-L-methionine = 5-methylcytidine(1962) in 23S rRNA + S-adenosyl-L-homocysteine + H(+). Specifically methylates the cytosine at position 1962 (m5C1962) of 23S rRNA. This Salmonella typhi protein is Ribosomal RNA large subunit methyltransferase I.